The sequence spans 165 residues: Small ribosomal subunit protein uS5 (165 aa).

Residues Leu-13–Ile-76 enclose the S5 DRBM domain.

The protein belongs to the universal ribosomal protein uS5 family. As to quaternary structure, part of the 30S ribosomal subunit. Contacts proteins S4 and S8.

With S4 and S12 plays an important role in translational accuracy. Functionally, located at the back of the 30S subunit body where it stabilizes the conformation of the head with respect to the body. This chain is Small ribosomal subunit protein uS5, found in Chlamydia caviae (strain ATCC VR-813 / DSM 19441 / 03DC25 / GPIC) (Chlamydophila caviae).